The following is a 329-amino-acid chain: UDP-N-acetylenolpyruvoylglucosamine reductase (329 aa).

One can recognise an FAD-binding PCMH-type domain in the interval 28-192; that stretch reads RVGGPADLLC…ARVEVRLRPG (165 aa). Arg-172 is a catalytic residue. Residues 204 to 225 form a disordered region; the sequence is DRERRRATQPLDRPTFGSTFTN. The Proton donor role is filled by Ser-221. The active site involves Glu-291. Residues 303–329 are disordered; that stretch reads LAGLDGHAADGGGPGAASGGARPREAT. Over residues 311-320 the composition is skewed to gly residues; that stretch reads ADGGGPGAAS.

This sequence belongs to the MurB family. Requires FAD as cofactor.

The protein localises to the cytoplasm. It carries out the reaction UDP-N-acetyl-alpha-D-muramate + NADP(+) = UDP-N-acetyl-3-O-(1-carboxyvinyl)-alpha-D-glucosamine + NADPH + H(+). It functions in the pathway cell wall biogenesis; peptidoglycan biosynthesis. Its function is as follows. Cell wall formation. The chain is UDP-N-acetylenolpyruvoylglucosamine reductase from Anaeromyxobacter dehalogenans (strain 2CP-C).